A 465-amino-acid chain; its full sequence is Ribulose bisphosphate carboxylase large chain (465 aa).

Position 4 is an N6,N6,N6-trimethyllysine (Lys4). Positions 113 and 163 each coordinate substrate. Lys165 functions as the Proton acceptor in the catalytic mechanism. Residue Lys167 coordinates substrate. Mg(2+) contacts are provided by Lys191, Asp193, and Glu194. Lys191 carries the post-translational modification N6-carboxylysine. His284 (proton acceptor) is an active-site residue. Residues Arg285, His317, and Ser369 each coordinate substrate.

The protein belongs to the RuBisCO large chain family. Type I subfamily. Heterohexadecamer of 8 large chains and 8 small chains; disulfide-linked. The disulfide link is formed within the large subunit homodimers. The cofactor is Mg(2+). In terms of processing, the disulfide bond which can form in the large chain dimeric partners within the hexadecamer appears to be associated with oxidative stress and protein turnover.

The protein localises to the plastid. The protein resides in the chloroplast. It catalyses the reaction 2 (2R)-3-phosphoglycerate + 2 H(+) = D-ribulose 1,5-bisphosphate + CO2 + H2O. The enzyme catalyses D-ribulose 1,5-bisphosphate + O2 = 2-phosphoglycolate + (2R)-3-phosphoglycerate + 2 H(+). Its function is as follows. RuBisCO catalyzes two reactions: the carboxylation of D-ribulose 1,5-bisphosphate, the primary event in carbon dioxide fixation, as well as the oxidative fragmentation of the pentose substrate in the photorespiration process. Both reactions occur simultaneously and in competition at the same active site. This is Ribulose bisphosphate carboxylase large chain from Senega cruciata (Cross-leaved milkwort).